The primary structure comprises 142 residues: Transcription antitermination protein NusB (142 aa).

The protein belongs to the NusB family.

Its function is as follows. Involved in transcription antitermination. Required for transcription of ribosomal RNA (rRNA) genes. Binds specifically to the boxA antiterminator sequence of the ribosomal RNA (rrn) operons. The polypeptide is Transcription antitermination protein NusB (Roseiflexus castenholzii (strain DSM 13941 / HLO8)).